We begin with the raw amino-acid sequence, 45 residues long: Large ribosomal subunit protein bL34 (45 aa).

A disordered region spans residues M1–T27. A compositionally biased stretch (basic residues) spans S10–T27.

It belongs to the bacterial ribosomal protein bL34 family.

This Synechococcus sp. (strain CC9902) protein is Large ribosomal subunit protein bL34.